The chain runs to 382 residues: F-box/LRR-repeat/kelch-repeat protein At1g09650 (382 aa).

Positions Cys-7–Arg-52 constitute an F-box domain. The LRR 1 repeat unit spans residues Ile-78–Glu-101. Residues Pro-180–Val-227 form a Kelch 1 repeat. An LRR 2 repeat occupies Glu-239–Asn-262. One copy of the Kelch 2 repeat lies at Met-270 to Val-319.

The polypeptide is F-box/LRR-repeat/kelch-repeat protein At1g09650 (Arabidopsis thaliana (Mouse-ear cress)).